A 149-amino-acid chain; its full sequence is D-aminoacyl-tRNA deacylase (149 aa).

A Gly-cisPro motif, important for rejection of L-amino acids motif is present at residues 137 to 138 (GP).

It belongs to the DTD family. As to quaternary structure, homodimer.

It is found in the cytoplasm. It catalyses the reaction glycyl-tRNA(Ala) + H2O = tRNA(Ala) + glycine + H(+). The catalysed reaction is a D-aminoacyl-tRNA + H2O = a tRNA + a D-alpha-amino acid + H(+). Its function is as follows. An aminoacyl-tRNA editing enzyme that deacylates mischarged D-aminoacyl-tRNAs. Also deacylates mischarged glycyl-tRNA(Ala), protecting cells against glycine mischarging by AlaRS. Acts via tRNA-based rather than protein-based catalysis; rejects L-amino acids rather than detecting D-amino acids in the active site. By recycling D-aminoacyl-tRNA to D-amino acids and free tRNA molecules, this enzyme counteracts the toxicity associated with the formation of D-aminoacyl-tRNA entities in vivo and helps enforce protein L-homochirality. This Clostridium kluyveri (strain ATCC 8527 / DSM 555 / NBRC 12016 / NCIMB 10680 / K1) protein is D-aminoacyl-tRNA deacylase.